A 557-amino-acid polypeptide reads, in one-letter code: Arginine--tRNA ligase (557 aa).

The 'HIGH' region signature appears at 128–138 (ANPTGPLHVGH).

It belongs to the class-I aminoacyl-tRNA synthetase family. As to quaternary structure, monomer.

It localises to the cytoplasm. It carries out the reaction tRNA(Arg) + L-arginine + ATP = L-arginyl-tRNA(Arg) + AMP + diphosphate. This Thiobacillus denitrificans (strain ATCC 25259 / T1) protein is Arginine--tRNA ligase.